Reading from the N-terminus, the 239-residue chain is Enolase-phosphatase E1 (239 aa).

Residues D13 and E15 each coordinate Mg(2+). Residues 133-134 (SS) and K170 each bind substrate. D196 lines the Mg(2+) pocket.

This sequence belongs to the HAD-like hydrolase superfamily. MasA/MtnC family. As to quaternary structure, monomer. Requires Mg(2+) as cofactor.

The protein resides in the cytoplasm. The protein localises to the nucleus. The enzyme catalyses 5-methylsulfanyl-2,3-dioxopentyl phosphate + H2O = 1,2-dihydroxy-5-(methylsulfanyl)pent-1-en-3-one + phosphate. Its pathway is amino-acid biosynthesis; L-methionine biosynthesis via salvage pathway; L-methionine from S-methyl-5-thio-alpha-D-ribose 1-phosphate: step 3/6. It functions in the pathway amino-acid biosynthesis; L-methionine biosynthesis via salvage pathway; L-methionine from S-methyl-5-thio-alpha-D-ribose 1-phosphate: step 4/6. Its function is as follows. Bifunctional enzyme that catalyzes the enolization of 2,3-diketo-5-methylthiopentyl-1-phosphate (DK-MTP-1-P) into the intermediate 2-hydroxy-3-keto-5-methylthiopentenyl-1-phosphate (HK-MTPenyl-1-P), which is then dephosphorylated to form the acireductone 1,2-dihydroxy-3-keto-5-methylthiopentene (DHK-MTPene). The chain is Enolase-phosphatase E1 from Chaetomium globosum (strain ATCC 6205 / CBS 148.51 / DSM 1962 / NBRC 6347 / NRRL 1970) (Soil fungus).